Here is a 459-residue protein sequence, read N- to C-terminus: MSNKAWGGRFSEQPEDWVDEFNASIHFDKTLIQYDVQGSIAHAKMLAKQDIITDSDCDQIIEGLNAILKDYEQDNLELDTSLEDIHLNIEHELIKRIGDAGGRLHTGRSRNDQVATDMHLYTKAEVNALIELITQFQHTIVNTAESHINTIMPGYTHLQRAQPISFAHHILTYYWMLERDKSRFQDSLKRIDISPLGAAALSGTTYPIDRHETQSLLDFSAIYENSMDAVSDRDYIVETLHNISLTMVHLSRFAEEIIFWSSAEANFITLSDAFSTGSSIMPQKKNPDMAELIRGKVGRTTGHLMSMLMTLKGLPLAYNKDMQEDKEGLFDAVHTLKGSLRIFDGMIDSMTVNVERLQQTVYNDFSNATELADYLVNKGVPFRSAHEVVGKIVLWSIQHNIYLLDVPLEQYQSANELIEADIYDYLKPENCVSRRISYGSTGQSSVQQQLDIIHKELSD.

This sequence belongs to the lyase 1 family. Argininosuccinate lyase subfamily.

The protein localises to the cytoplasm. It catalyses the reaction 2-(N(omega)-L-arginino)succinate = fumarate + L-arginine. It participates in amino-acid biosynthesis; L-arginine biosynthesis; L-arginine from L-ornithine and carbamoyl phosphate: step 3/3. The polypeptide is Argininosuccinate lyase (Staphylococcus saprophyticus subsp. saprophyticus (strain ATCC 15305 / DSM 20229 / NCIMB 8711 / NCTC 7292 / S-41)).